We begin with the raw amino-acid sequence, 147 residues long: Ribosome-binding factor A (147 aa).

Residues 123–147 (LAKLKEGAQPAGDANPYKTSDEEED) are disordered.

This sequence belongs to the RbfA family. Monomer. Binds 30S ribosomal subunits, but not 50S ribosomal subunits or 70S ribosomes.

The protein resides in the cytoplasm. In terms of biological role, one of several proteins that assist in the late maturation steps of the functional core of the 30S ribosomal subunit. Associates with free 30S ribosomal subunits (but not with 30S subunits that are part of 70S ribosomes or polysomes). Required for efficient processing of 16S rRNA. May interact with the 5'-terminal helix region of 16S rRNA. The sequence is that of Ribosome-binding factor A from Corynebacterium aurimucosum (strain ATCC 700975 / DSM 44827 / CIP 107346 / CN-1) (Corynebacterium nigricans).